A 302-amino-acid chain; its full sequence is Late embryogenesis abundant protein D-29 (302 aa).

3 disordered regions span residues 25 to 93, 168 to 193, and 205 to 302; these read HMPS…AKEY, VKNAAKGKSSEMRQATTEKARELADS, and AKEK…NHKN. Composition is skewed to basic and acidic residues over residues 34–70 and 79–93; these read RDYSKLKTKTEEATDEHHSRTQQAKDELKSKADHAAN and AKDRASEVGKEAKEY. Basic and acidic residues predominate over residues 205–286; that stretch reads AKEKVRDMAD…KAEETIESAK (82 aa).

It belongs to the LEA type 1 family.

LEA protein are late embryonic proteins abundant in higher plant seed embryos. There are two subsets of LEA proteins (5a and 5b), the first ones are expressed when the cotyledon weight reach 80 mg and the second set are expressed above 100 mg. The function of those proteins is not known. This chain is Late embryogenesis abundant protein D-29, found in Gossypium hirsutum (Upland cotton).